Consider the following 159-residue polypeptide: uncharacterized protein (159 aa).

The next 2 helical transmembrane spans lie at 59–79 and 91–113; these read IGAL…ALVY and VFSV…RRVC.

It is found in the cell membrane. This is an uncharacterized protein from Treponema pallidum (strain Nichols).